A 48-amino-acid polypeptide reads, in one-letter code: Cathepsin B (48 aa).

It belongs to the peptidase C1 family. As to quaternary structure, dimer of a heavy chain and a light chain cross-linked by a disulfide bond.

The protein localises to the lysosome. The catalysed reaction is Hydrolysis of proteins with broad specificity for peptide bonds. Preferentially cleaves -Arg-Arg-|-Xaa bonds in small molecule substrates (thus differing from cathepsin L). In addition to being an endopeptidase, shows peptidyl-dipeptidase activity, liberating C-terminal dipeptides.. Thiol protease which is believed to participate in intracellular degradation and turnover of proteins. Has also been implicated in tumor invasion and metastasis. The polypeptide is Cathepsin B (CTSB) (Coturnix japonica (Japanese quail)).